The chain runs to 48 residues: Palustrin-3a (48 aa).

The cysteines at positions 43 and 48 are disulfide-linked.

Expressed by the skin glands.

The protein resides in the secreted. Functionally, antimicrobial activity against Gram-negative bacterium E.coli. The chain is Palustrin-3a from Lithobates palustris (Pickerel frog).